The sequence spans 660 residues: Phosphatidylinositol-3-phosphate phosphatase MTMR7 (660 aa).

The Myotubularin phosphatase domain occupies 126-504; sequence GWVLIDLSEE…FMYKFWSGMY (379 aa). Residues Asn-250, Asn-275, and Ile-276 each coordinate a 1,2-diacyl-sn-glycero-3-phospho-(1D-myo-inositol-3-phosphate). Cys-338 acts as the Phosphocysteine intermediate in catalysis. Ser-339, Asp-340, Gly-341, Trp-342, Asp-343, Arg-344, and Arg-384 together coordinate a 1,2-diacyl-sn-glycero-3-phospho-(1D-myo-inositol-3-phosphate). Residues 514–558 adopt a coiled-coil conformation; it reads RQSVTDYLMAVKEETQQLEEELEALEERLEKIQKVQLNCTKVKSK. Residues 554–660 are disordered; that stretch reads KVKSKQSEPS…DSDEAVFLTA (107 aa). Polar residues predominate over residues 566–596; that stretch reads SGFSTSDNSIANTPQDYSGNMKSFPSRSPSQ. Phosphothreonine is present on Thr-578. Positions 641–653 are enriched in basic and acidic residues; the sequence is APSEDSGKDRDSD.

This sequence belongs to the protein-tyrosine phosphatase family. Non-receptor class myotubularin subfamily. In terms of assembly, heterodimer (via C-terminus) with MTMR9 (via coiled coil domain); the interaction enhances MTMR7 catalytic activity. Does not homodimerize. Interacts with RAB1B (in GDP-bound form).

It localises to the cytoplasm. Its subcellular location is the endomembrane system. It catalyses the reaction a 1,2-diacyl-sn-glycero-3-phospho-(1D-myo-inositol-3-phosphate) + H2O = a 1,2-diacyl-sn-glycero-3-phospho-(1D-myo-inositol) + phosphate. The enzyme catalyses 1D-myo-inositol 1,3-bisphosphate + H2O = 1D-myo-inositol 1-phosphate + phosphate. With respect to regulation, interaction with MTMR9 increases phosphatase activity. Its function is as follows. Lipid phosphatase that specifically dephosphorylates the D-3 position of phosphatidylinositol 3-phosphate (PtdIns(3)P) and inositol 1,3-bisphosphate (Ins(1,3)P2). The polypeptide is Phosphatidylinositol-3-phosphate phosphatase MTMR7 (Pongo abelii (Sumatran orangutan)).